The sequence spans 572 residues: Putative two-component response regulator ARR13 (572 aa).

The Response regulatory domain occupies 17–134 (NVMVVDDNRV…DLPKIYQFAL (118 aa)). D71 is modified (4-aspartylphosphate). A disordered region spans residues 175-225 (KKNCSSKSDTRTVNSTNVSHVSTNGSRKNRKRKPKGGPSDDGESLSQPPKK). The span at 179 to 197 (SSKSDTRTVNSTNVSHVST) shows a compositional bias: polar residues. A Nuclear localization signal motif is present at residues 224–227 (KKKK). Positions 227-277 (KIWWTNPLQDLFLQAIQHIGYDKVVPKKILAIMNVPYLTRENVASHLQKYR) form a DNA-binding region, myb-like GARP. Residues 509–522 (NQDQSNGESSNTIA) are compositionally biased toward polar residues. The interval 509-531 (NQDQSNGESSNTIATPETNTPNF) is disordered.

It belongs to the ARR family. Type-B subfamily. As to quaternary structure, binds the target DNA as a monomer. In terms of processing, two-component system major event consists of a His-to-Asp phosphorelay between a sensor histidine kinase (HK) and a response regulator (RR). In plants, the His-to-Asp phosphorelay involves an additional intermediate named Histidine-containing phosphotransfer protein (HPt). This multistep phosphorelay consists of a His-Asp-His-Asp sequential transfer of a phosphate group between first a His and an Asp of the HK protein, followed by the transfer to a conserved His of the HPt protein and finally the transfer to an Asp in the receiver domain of the RR protein.

The protein localises to the nucleus. Putative transcriptional activator that binds specifically to the DNA sequence 5'-[AG]GATT-3'. Functions as a response regulator involved in His-to-Asp phosphorelay signal transduction system. Phosphorylation of the Asp residue in the receiver domain activates the ability of the protein to promote the transcription of target genes. Could directly activate some type-A response regulators in response to cytokinins. The sequence is that of Putative two-component response regulator ARR13 (ARR13) from Arabidopsis thaliana (Mouse-ear cress).